The chain runs to 128 residues: Probable 4-amino-4-deoxy-L-arabinose-phosphoundecaprenol flippase subunit ArnF (128 aa).

At 1 to 2 (MG) the chain is on the cytoplasmic side. A helical transmembrane segment spans residues 3–23 (LMWGLFSVIIASAAQLSLGFA). Topologically, residues 24 to 35 (ASHLPPMTHLWD) are periplasmic. The helical transmembrane segment at 36–56 (FIAALLAFGLDARILLLGLLG) threads the bilayer. Over 57 to 76 (YLLSVFCWYKTLHKLALSKA) the chain is Cytoplasmic. A helical membrane pass occupies residues 77–97 (YALLSMSYVLVWIASMVLPGW). The Periplasmic segment spans residues 98 to 100 (EGT). Residues 101 to 121 (FSLKALLGVACIMSGLMLIFL) form a helical membrane-spanning segment. The Cytoplasmic portion of the chain corresponds to 122 to 128 (PTTKQRY).

It belongs to the ArnF family. As to quaternary structure, heterodimer of ArnE and ArnF.

Its subcellular location is the cell inner membrane. It participates in bacterial outer membrane biogenesis; lipopolysaccharide biosynthesis. Translocates 4-amino-4-deoxy-L-arabinose-phosphoundecaprenol (alpha-L-Ara4N-phosphoundecaprenol) from the cytoplasmic to the periplasmic side of the inner membrane. In Escherichia coli O127:H6 (strain E2348/69 / EPEC), this protein is Probable 4-amino-4-deoxy-L-arabinose-phosphoundecaprenol flippase subunit ArnF.